The following is a 74-amino-acid chain: Antimicrobial peptide HsAp1 (74 aa).

A signal peptide spans 1 to 21 (MSRRVILTLVLVTILVKTMAG). Positions 22-33 (MESKKVETTDEI) are excised as a propeptide. Residue Pro-65 is modified to Proline amide. The propeptide occupies 69 to 74 (AISEQT).

It belongs to the non-disulfide-bridged peptide (NDBP) superfamily. Medium-length antimicrobial peptide (group 3) family. In terms of tissue distribution, expressed by the venom gland.

The protein localises to the secreted. It localises to the target cell membrane. In terms of biological role, possesses antimicrobial activity against both Gram-negative (MIC=23.8-51.2 uM) and Gram-positive (MIC=11.8-46.5 uM) bacteria, as well as against the fungus C.tropicalis (MIC=48.6 uM). Also possesses a relatively high hemolytic activity. May act by disrupting the integrity of the bacterial cell membrane. This chain is Antimicrobial peptide HsAp1, found in Heterometrus spinifer (Asia giant forest scorpion).